Here is a 374-residue protein sequence, read N- to C-terminus: Chaperone protein DnaJ (374 aa).

In terms of domain architecture, J spans 4-68 (DYYDILGVSR…ETRARYDRFG (65 aa)). Residues 133 to 215 (GGEKQIRITH…CGGNGQAQVT (83 aa)) form a CR-type zinc finger. Zn(2+) contacts are provided by Cys-146, Cys-149, Cys-163, Cys-166, Cys-189, Cys-192, Cys-203, and Cys-206. CXXCXGXG motif repeat units follow at residues 146–153 (CTTCNGSG), 163–170 (CGTCGGAG), 189–196 (CPTCNGKG), and 203–210 (CETCGGNG).

Belongs to the DnaJ family. In terms of assembly, homodimer. It depends on Zn(2+) as a cofactor.

It is found in the cytoplasm. Its function is as follows. Participates actively in the response to hyperosmotic and heat shock by preventing the aggregation of stress-denatured proteins and by disaggregating proteins, also in an autonomous, DnaK-independent fashion. Unfolded proteins bind initially to DnaJ; upon interaction with the DnaJ-bound protein, DnaK hydrolyzes its bound ATP, resulting in the formation of a stable complex. GrpE releases ADP from DnaK; ATP binding to DnaK triggers the release of the substrate protein, thus completing the reaction cycle. Several rounds of ATP-dependent interactions between DnaJ, DnaK and GrpE are required for fully efficient folding. Also involved, together with DnaK and GrpE, in the DNA replication of plasmids through activation of initiation proteins. The polypeptide is Chaperone protein DnaJ (Cyanothece sp. (strain PCC 7425 / ATCC 29141)).